We begin with the raw amino-acid sequence, 200 residues long: Endoribonuclease YbeY (200 aa).

The span at 1–18 shows a compositional bias: pro residues; sequence MPADPALPDPVPPGPTAP. The interval 1 to 22 is disordered; the sequence is MPADPALPDPVPPGPTAPVPTD. Zn(2+) is bound by residues His151, His155, and His161.

It belongs to the endoribonuclease YbeY family. The cofactor is Zn(2+).

The protein resides in the cytoplasm. Single strand-specific metallo-endoribonuclease involved in late-stage 70S ribosome quality control and in maturation of the 3' terminus of the 16S rRNA. This chain is Endoribonuclease YbeY, found in Rhodospirillum rubrum (strain ATCC 11170 / ATH 1.1.1 / DSM 467 / LMG 4362 / NCIMB 8255 / S1).